Consider the following 275-residue polypeptide: NH(3)-dependent NAD(+) synthetase (275 aa).

50-57 (GISGGVDS) contacts ATP. Asp-56 lines the Mg(2+) pocket. Arg-147 lines the deamido-NAD(+) pocket. Thr-167 lines the ATP pocket. Glu-172 serves as a coordination point for Mg(2+). Residues Lys-180 and Asp-187 each coordinate deamido-NAD(+). 2 residues coordinate ATP: Lys-196 and Thr-218. A deamido-NAD(+)-binding site is contributed by 267 to 268 (HK).

This sequence belongs to the NAD synthetase family. In terms of assembly, homodimer.

It carries out the reaction deamido-NAD(+) + NH4(+) + ATP = AMP + diphosphate + NAD(+) + H(+). It functions in the pathway cofactor biosynthesis; NAD(+) biosynthesis; NAD(+) from deamido-NAD(+) (ammonia route): step 1/1. Its function is as follows. Catalyzes the ATP-dependent amidation of deamido-NAD to form NAD. Uses ammonia as a nitrogen source. The sequence is that of NH(3)-dependent NAD(+) synthetase from Ectopseudomonas mendocina (strain ymp) (Pseudomonas mendocina).